The following is a 324-amino-acid chain: Kelch domain-containing protein AF_2170 (324 aa).

Kelch repeat units lie at residues 229–276 (YIFA…VGGE) and 277–323 (YIYI…NNGK).

This Archaeoglobus fulgidus (strain ATCC 49558 / DSM 4304 / JCM 9628 / NBRC 100126 / VC-16) protein is Kelch domain-containing protein AF_2170.